A 77-amino-acid polypeptide reads, in one-letter code: uncharacterized protein (77 aa).

A helical membrane pass occupies residues 49 to 71; that stretch reads LVIASLILAIILLGILYYISYQM.

Its subcellular location is the membrane. This is an uncharacterized protein from Archaeoglobus fulgidus (strain ATCC 49558 / DSM 4304 / JCM 9628 / NBRC 100126 / VC-16).